A 322-amino-acid polypeptide reads, in one-letter code: Phosphatidylglycerol--prolipoprotein diacylglyceryl transferase (322 aa).

Helical transmembrane passes span 21-41 (PLPIRAYAMCIIAGIIVAIWL), 50-70 (GGNPEVVLDAAIVAVPAGIIG), 98-118 (NGGLGIWGAVILGGLAVWAYF), and 123-143 (IPLAPFADAVAPGVILAQAIG). Position 144 (arginine 144) interacts with a 1,2-diacyl-sn-glycero-3-phospho-(1'-sn-glycerol). Transmembrane regions (helical) follow at residues 191–211 (VHPTFLYEMLWNLLIFGLLIW) and 254–274 (INTLVSAVVFILAVIVFLRLG). The segment at 283–322 (VDPAYHAAQAERDDTETAGLDATTGTVPGDSPETTGKKRK) is disordered.

The protein belongs to the Lgt family.

The protein localises to the cell membrane. It catalyses the reaction L-cysteinyl-[prolipoprotein] + a 1,2-diacyl-sn-glycero-3-phospho-(1'-sn-glycerol) = an S-1,2-diacyl-sn-glyceryl-L-cysteinyl-[prolipoprotein] + sn-glycerol 1-phosphate + H(+). Its pathway is protein modification; lipoprotein biosynthesis (diacylglyceryl transfer). Functionally, catalyzes the transfer of the diacylglyceryl group from phosphatidylglycerol to the sulfhydryl group of the N-terminal cysteine of a prolipoprotein, the first step in the formation of mature lipoproteins. The sequence is that of Phosphatidylglycerol--prolipoprotein diacylglyceryl transferase from Corynebacterium efficiens (strain DSM 44549 / YS-314 / AJ 12310 / JCM 11189 / NBRC 100395).